The chain runs to 325 residues: Ribosomal RNA small subunit methyltransferase H (325 aa).

S-adenosyl-L-methionine-binding positions include 42–44 (GGH), aspartate 62, phenylalanine 86, aspartate 105, and glutamine 112.

It belongs to the methyltransferase superfamily. RsmH family.

It is found in the cytoplasm. The catalysed reaction is cytidine(1402) in 16S rRNA + S-adenosyl-L-methionine = N(4)-methylcytidine(1402) in 16S rRNA + S-adenosyl-L-homocysteine + H(+). Specifically methylates the N4 position of cytidine in position 1402 (C1402) of 16S rRNA. This is Ribosomal RNA small subunit methyltransferase H from Cupriavidus metallidurans (strain ATCC 43123 / DSM 2839 / NBRC 102507 / CH34) (Ralstonia metallidurans).